The following is a 73-amino-acid chain: Large ribosomal subunit protein uL24 (73 aa).

Over residues 51–65 (DDNPKGGFIHKEKPM) the composition is skewed to basic and acidic residues. The interval 51 to 73 (DDNPKGGFIHKEKPMHISNVKKA) is disordered.

The protein belongs to the universal ribosomal protein uL24 family. In terms of assembly, part of the 50S ribosomal subunit.

One of two assembly initiator proteins, it binds directly to the 5'-end of the 23S rRNA, where it nucleates assembly of the 50S subunit. Functionally, one of the proteins that surrounds the polypeptide exit tunnel on the outside of the subunit. The chain is Large ribosomal subunit protein uL24 from Helicobacter acinonychis (strain Sheeba).